The chain runs to 284 residues: Shikimate dehydrogenase (NADP(+)) (284 aa).

Shikimate contacts are provided by residues 20-22 (SIS) and Ser-67. The active-site Proton acceptor is the Lys-71. Asp-83 lines the NADP(+) pocket. Asn-92 and Asp-107 together coordinate shikimate. NADP(+) is bound by residues 129 to 133 (GAGGA) and Ile-227. Tyr-229 is a shikimate binding site. Position 250 (Gly-250) interacts with NADP(+).

The protein belongs to the shikimate dehydrogenase family. Homodimer.

It carries out the reaction shikimate + NADP(+) = 3-dehydroshikimate + NADPH + H(+). The protein operates within metabolic intermediate biosynthesis; chorismate biosynthesis; chorismate from D-erythrose 4-phosphate and phosphoenolpyruvate: step 4/7. In terms of biological role, involved in the biosynthesis of the chorismate, which leads to the biosynthesis of aromatic amino acids. Catalyzes the reversible NADPH linked reduction of 3-dehydroshikimate (DHSA) to yield shikimate (SA). The sequence is that of Shikimate dehydrogenase (NADP(+)) from Streptococcus pneumoniae serotype 2 (strain D39 / NCTC 7466).